The following is a 348-amino-acid chain: Anthranilate phosphoribosyltransferase (348 aa).

Residues Gly-91, 94–95, Thr-99, 101–104, 119–127, and Ser-131 each bind 5-phospho-alpha-D-ribose 1-diphosphate; these read GD, NIST, and KHGNRSASG. Residue Gly-91 coordinates anthranilate. Residue Ser-103 participates in Mg(2+) binding. Asn-122 is an anthranilate binding site. An anthranilate-binding site is contributed by Arg-177. Residues Asp-236 and Glu-237 each coordinate Mg(2+).

Belongs to the anthranilate phosphoribosyltransferase family. Homodimer. The cofactor is Mg(2+).

The catalysed reaction is N-(5-phospho-beta-D-ribosyl)anthranilate + diphosphate = 5-phospho-alpha-D-ribose 1-diphosphate + anthranilate. Its pathway is amino-acid biosynthesis; L-tryptophan biosynthesis; L-tryptophan from chorismate: step 2/5. In terms of biological role, catalyzes the transfer of the phosphoribosyl group of 5-phosphorylribose-1-pyrophosphate (PRPP) to anthranilate to yield N-(5'-phosphoribosyl)-anthranilate (PRA). The protein is Anthranilate phosphoribosyltransferase of Synechococcus sp. (strain ATCC 27144 / PCC 6301 / SAUG 1402/1) (Anacystis nidulans).